We begin with the raw amino-acid sequence, 79 residues long: Small ribosomal subunit protein bS21 (79 aa).

Basic residues-rich tracts occupy residues 47 to 59 (RKQA…HLKK) and 69 to 79 (GVGHRRKKSTT). The tract at residues 47–79 (RKQAAAVKRHLKKISRDVSSRRGVGHRRKKSTT) is disordered.

It belongs to the bacterial ribosomal protein bS21 family.

In Legionella pneumophila (strain Paris), this protein is Small ribosomal subunit protein bS21.